The primary structure comprises 397 residues: MIGAADLVAGLTGLGVTTVAGVPCSYLTPLINRVISDPATRYLTVTQEGEAAAVAAGAWLGGGLGCAITQNSGLGNMTNPLTSLLHPARIPAVVITTWRGRPGEKDEPQHHLMGRITGDLLDLCDMEWSLIPDTTDELHTAFAACRASLAHRELPYGFLLPQGVVADEPLNETAPRSATGQVVRYARPGRSAARPTRIAALERLLAELPRDAAVVSTTGKSSRELYTLDDRDQHFYMVGAMGSAATVGLGVALHTPRPVVVVDGDGSVLMRLGSLATVGAHAPGNLVHLVLDNGVHDSTGGQRTLSSAVDLPAVAAACGYRAVHACTSLDDLSDALATALATDGPTLVHLAIRPGSLDGLGRPKVTPAEVARRFRAFVTTPPAGTATPVHAGGVTAR.

The protein belongs to the TPP enzyme family. Thiamine diphosphate is required as a cofactor. Requires Mg(2+) as cofactor.

It carries out the reaction 3-phosphonopyruvate + H(+) = phosphonoacetaldehyde + CO2. Its pathway is secondary metabolite biosynthesis; bialaphos biosynthesis. Involved in the biosynthesis of phosphinothricin tripeptide (PTT), also known as bialaphos (BA), a natural-product antibiotic and potent herbicide. Catalyzes the decarboxylation of phosphonopyruvate (PnPy) to generate phosphonoacetaldehyde (PnAA). The chain is Phosphonopyruvate decarboxylase from Streptomyces viridochromogenes (strain DSM 40736 / JCM 4977 / BCRC 1201 / Tue 494).